A 635-amino-acid polypeptide reads, in one-letter code: DNA-directed RNA polymerase subunit gamma (635 aa).

The Zn(2+) site is built by Cys74, Cys76, Cys89, and Cys92. Mg(2+) contacts are provided by Asp471, Asp473, and Asp475.

The protein belongs to the RNA polymerase beta' chain family. RpoC1 subfamily. In cyanobacteria the RNAP catalytic core is composed of 2 alpha, 1 beta, 1 beta', 1 gamma and 1 omega subunit. When a sigma factor is associated with the core the holoenzyme is formed, which can initiate transcription. Requires Mg(2+) as cofactor. It depends on Zn(2+) as a cofactor.

The enzyme catalyses RNA(n) + a ribonucleoside 5'-triphosphate = RNA(n+1) + diphosphate. Functionally, DNA-dependent RNA polymerase catalyzes the transcription of DNA into RNA using the four ribonucleoside triphosphates as substrates. The protein is DNA-directed RNA polymerase subunit gamma of Prochlorococcus marinus (strain NATL2A).